Here is a 493-residue protein sequence, read N- to C-terminus: Ribose import ATP-binding protein RbsA (493 aa).

ABC transporter domains lie at 3–239 and 252–493; these read IKMK…VGRE and GRVV…TGGR. 35-42 serves as a coordination point for ATP; that stretch reads GENGAGKS.

It belongs to the ABC transporter superfamily. Ribose importer (TC 3.A.1.2.1) family. The complex is composed of an ATP-binding protein (RbsA), two transmembrane proteins (RbsC) and a solute-binding protein (RbsB).

The protein resides in the cell membrane. The enzyme catalyses D-ribose(out) + ATP + H2O = D-ribose(in) + ADP + phosphate + H(+). In terms of biological role, part of the ABC transporter complex RbsABC involved in ribose import. Responsible for energy coupling to the transport system. This Bacillus licheniformis (strain ATCC 14580 / DSM 13 / JCM 2505 / CCUG 7422 / NBRC 12200 / NCIMB 9375 / NCTC 10341 / NRRL NRS-1264 / Gibson 46) protein is Ribose import ATP-binding protein RbsA.